The sequence spans 196 residues: DnaA initiator-associating protein DiaA (196 aa).

Residues 34–196 enclose the SIS domain; the sequence is LVQSLLNGNK…DNTLFPHQDD (163 aa).

It belongs to the SIS family. DiaA subfamily. As to quaternary structure, homotetramer; dimer of dimers.

Required for the timely initiation of chromosomal replication via direct interactions with the DnaA initiator protein. This chain is DnaA initiator-associating protein DiaA, found in Klebsiella pneumoniae (strain 342).